Reading from the N-terminus, the 279-residue chain is MKENEKVIMEKGIHTDFKENMTYGEYLQLDSLLSSQKRLSDHHDEMLFIVIHQASELWMKLILHELNAAIESIKQDKLQPAFKMLARVSKIQSQIIQSWDILATLTPSEYIEFRDSLGQASGFQSYQYRMIEYALGYKTPHALKIYEKDQELHARLHTALHAPSLYDVAIQALVKEGFSIHKDVLNRDITQPYEEDATVEAAWLEVYADVKKYWNLYQLAEKLIDIEDWLQQWRFRHMKTVERIIGHKMGTGGSSGVSYLKRVLDQRFFPELWNVRTKL.

Substrate-binding positions include 48-52, Y110, and R114; that span reads FIVIH. H237 contributes to the heme binding site. Substrate is bound at residue T251.

Belongs to the tryptophan 2,3-dioxygenase family. As to quaternary structure, homotetramer. It depends on heme as a cofactor.

It carries out the reaction L-tryptophan + O2 = N-formyl-L-kynurenine. It participates in amino-acid degradation; L-tryptophan degradation via kynurenine pathway; L-kynurenine from L-tryptophan: step 1/2. Functionally, heme-dependent dioxygenase that catalyzes the oxidative cleavage of the L-tryptophan (L-Trp) pyrrole ring and converts L-tryptophan to N-formyl-L-kynurenine. Catalyzes the oxidative cleavage of the indole moiety. In Bacillus thuringiensis subsp. konkukian (strain 97-27), this protein is Tryptophan 2,3-dioxygenase.